Consider the following 668-residue polypeptide: UvrABC system protein B (668 aa).

The region spanning Arg-25–Gly-414 is the Helicase ATP-binding domain. Gly-38 to Thr-45 contacts ATP. Residues Tyr-91–Ile-114 carry the Beta-hairpin motif. The region spanning Asp-431 to Leu-594 is the Helicase C-terminal domain. Residues Lys-627–Gln-662 form the UVR domain.

Belongs to the UvrB family. As to quaternary structure, forms a heterotetramer with UvrA during the search for lesions. Interacts with UvrC in an incision complex.

The protein resides in the cytoplasm. The UvrABC repair system catalyzes the recognition and processing of DNA lesions. A damage recognition complex composed of 2 UvrA and 2 UvrB subunits scans DNA for abnormalities. Upon binding of the UvrA(2)B(2) complex to a putative damaged site, the DNA wraps around one UvrB monomer. DNA wrap is dependent on ATP binding by UvrB and probably causes local melting of the DNA helix, facilitating insertion of UvrB beta-hairpin between the DNA strands. Then UvrB probes one DNA strand for the presence of a lesion. If a lesion is found the UvrA subunits dissociate and the UvrB-DNA preincision complex is formed. This complex is subsequently bound by UvrC and the second UvrB is released. If no lesion is found, the DNA wraps around the other UvrB subunit that will check the other stand for damage. The protein is UvrABC system protein B of Treponema pallidum (strain Nichols).